Reading from the N-terminus, the 1004-residue chain is 26S proteasome non-ATPase regulatory subunit 1 homolog A (1004 aa).

Ala-2 bears the N-acetylalanine mark. A Glycyl lysine isopeptide (Lys-Gly) (interchain with G-Cter in ubiquitin) cross-link involves residue Lys-166. PC repeat units follow at residues 412 to 447 (SATA…GGSP), 452 to 485 (GALY…EVIQ), 487 to 521 (GACL…VAGE), 522 to 555 (AAGI…EKII), 557 to 590 (GLAL…IIRY), 591 to 626 (GGMY…DVRR), 627 to 659 (TAVL…PHVR), 661 to 695 (GAAL…FVRQ), 696 to 736 (GALI…DTMS), and 739 to 771 (GAIL…TAVI). Disordered regions lie at residues 858 to 905 (EQKA…KKAP) and 959 to 1004 (VLSL…EYAS). Position 896 is a phosphoserine (Ser-896). Residues 965–987 (APTSTASPATGTAAAAQGTPASA) show a composition bias toward low complexity.

Belongs to the proteasome subunit S1 family. As to quaternary structure, component of the 19S regulatory particle (RP/PA700) base subcomplex of the 26S proteasome. The 26S proteasome is composed of a core protease (CP), known as the 20S proteasome, capped at one or both ends by the 19S regulatory particle (RP/PA700). The RP/PA700 complex is composed of at least 17 different subunits in two subcomplexes, the base and the lid, which form the portions proximal and distal to the 20S proteolytic core, respectively. As to expression, ubiquitous with highest expression in flowers.

Functionally, acts as a regulatory subunit of the 26 proteasome which is involved in the ATP-dependent degradation of ubiquitinated proteins. In Arabidopsis thaliana (Mouse-ear cress), this protein is 26S proteasome non-ATPase regulatory subunit 1 homolog A (RPN2A).